A 388-amino-acid chain; its full sequence is Alcohol dehydrogenase patD (388 aa).

Position 46 (C46) interacts with Zn(2+). H47 is a binding site for NAD(+). 5 residues coordinate Zn(2+): H67, E68, C101, C104, and C112. H67 provides a ligand contact to substrate. NAD(+) contacts are provided by residues 198 to 203 (VALSRG), 295 to 297 (SLL), and 320 to 322 (EEA).

It belongs to the zinc-containing alcohol dehydrogenase family. The cofactor is Zn(2+).

It is found in the cytoplasm. Its subcellular location is the cytosol. The enzyme catalyses neopatulin + NADPH + H(+) = (E)-ascladiol + NADP(+). Its pathway is mycotoxin biosynthesis; patulin biosynthesis. Functionally, alcohol dehydrogenase; part of the gene cluster that mediates the biosynthesis of patulin, an acetate-derived tetraketide mycotoxin produced by several fungal species that shows antimicrobial properties against several bacteria. PatD catalyzes the conversion of neopatulin into E-ascladiol. The pathway begins with the synthesis of 6-methylsalicylic acid by the polyketide synthase (PKS) patK via condensation of acetate and malonate units. The 6-methylsalicylic acid decarboxylase patG then catalyzes the decarboxylation of 6-methylsalicylic acid to yield m-cresol (also known as 3-methylphenol). These first reactions occur in the cytosol. The intermediate m-cresol is then transported into the endoplasmic reticulum where the cytochrome P450 monooxygenase patH converts it to m-hydroxybenzyl alcohol, which is further converted to gentisyl alcohol by the cytochrome P450 monooxygenase patI. The oxidoreductases patJ and patO further convert gentisyl alcohol to isoepoxydon in the vacuole. PatN catalyzes then the transformation of isoepoxydon into phyllostine. The cluster protein patF is responsible for the conversion from phyllostine to neopatulin whereas the alcohol dehydrogenase patD converts neopatulin to E-ascladiol. The steps between isoepoxydon and E-ascladiol occur in the cytosol, and E-ascladiol is probably secreted to the extracellular space by one of the cluster-specific transporters patC or patM. Finally, the secreted patulin synthase patE catalyzes the conversion of E-ascladiol to patulin. The polypeptide is Alcohol dehydrogenase patD (Aspergillus clavatus (strain ATCC 1007 / CBS 513.65 / DSM 816 / NCTC 3887 / NRRL 1 / QM 1276 / 107)).